The chain runs to 99 residues: uncharacterized protein (99 aa).

The stretch at 3–68 (ERLKAITNLL…EKFDSNRKFY (66 aa)) forms a coiled coil.

This is an uncharacterized protein from Aquifex aeolicus (strain VF5).